The following is a 570-amino-acid chain: Serine/threonine-protein kinase STY17 (570 aa).

The segment at 112–145 (LNGNSGDVDPSDPAVNEDAQSSYNSRSLAPPTFG) is disordered. Residues 129-145 (DAQSSYNSRSLAPPTFG) are compositionally biased toward polar residues. Residues 180 to 260 (EITFSTIDRP…PCSKQKSITF (81 aa)) enclose the ACT domain. The Protein kinase domain occupies 292–545 (LKIEKKVACG…EIIEMLNQLI (254 aa)). Residues 298 to 306 (VACGSYGEL) and lysine 319 contribute to the ATP site. The Proton acceptor role is filled by aspartate 413. Serine 441 bears the Phosphoserine mark. The residue at position 445 (threonine 445) is a Phosphothreonine.

It belongs to the protein kinase superfamily. Ser/Thr protein kinase family. In terms of processing, autophosphorylated on serine and threonine residues. Autophosphorylated at Thr-445.

It is found in the cytoplasm. It localises to the cytosol. The catalysed reaction is L-seryl-[protein] + ATP = O-phospho-L-seryl-[protein] + ADP + H(+). The enzyme catalyses L-threonyl-[protein] + ATP = O-phospho-L-threonyl-[protein] + ADP + H(+). With respect to regulation, activated by autophosphorylation at Thr-445. Functionally, serine/threonine protein kinase that specifically phosphorylates chloroplast precursor proteins in the cytosol within the cleavable presequences (transit peptides). May be part of a cytosolic regulatory network involved in chloroplast protein import. Does not phosphorylate mitochondrion precursor proteins. Specific for ATP and does not utilize other NTPs. Plays a role in chloroplast biogenesis and differentiation in cotyledons, possibly through phosphorylation of chloroplast preproteins. The polypeptide is Serine/threonine-protein kinase STY17 (Arabidopsis thaliana (Mouse-ear cress)).